A 783-amino-acid polypeptide reads, in one-letter code: Cation/H(+) antiporter 2 (783 aa).

A run of 12 helical transmembrane segments spans residues 19-39 (LNTMFIQMACILVFSQLFYLL), 43-63 (CGQAGPVAQILAGIVLSPVLL), 81-101 (YYSFFSFALRTSFMFLIGLEV), 121-141 (FVVSGLLSFASLMLFIPLFGI), 145-165 (YFTFFLVLLVTLSNTASPVVV), 186-206 (ALFIELTNVVLYTIIMAFISG), 208-228 (IILELFLFLLATVALILINMV), 242-262 (YLSKAETLVFFIFLLIIGITI), 300-320 (EFVLPVYFGYIGFRFSIIALT), 323-343 (FYLGIVIIVIVTIAGKFIGVI), 355-375 (YWLFLPTILSVKGHVGLLLLD), and 391-411 (MMVAALVITTLVSGVLASFLL).

Belongs to the monovalent cation:proton antiporter 2 (CPA2) transporter (TC 2.A.37) family. CHX (TC 2.A.37.4) subfamily. As to expression, specifically expressed in pollen.

The protein resides in the membrane. Functionally, may operate as a cation/H(+) antiporter. The protein is Cation/H(+) antiporter 2 (CHX2) of Arabidopsis thaliana (Mouse-ear cress).